Here is a 207-residue protein sequence, read N- to C-terminus: MEKFTVLTAIAAPLPEANIDTDKIIPARFLKTTKRSGLGVHAFDGMRYNPDGSEKPDFVLNQAPYRQAGILITYDNLGCGSSREHAPWALLDFGIRCVIAPSFADIFFNNCFKNGILPIRLPREVCDALMDDARLGGNGRLTVDLERQVVIRPDGAEIAFEIDPLRRHLLLEGLDDIGQTLQHEGAIDTFEATRERAQPWQTRIVID.

This sequence belongs to the LeuD family. LeuD type 1 subfamily. In terms of assembly, heterodimer of LeuC and LeuD.

It catalyses the reaction (2R,3S)-3-isopropylmalate = (2S)-2-isopropylmalate. The protein operates within amino-acid biosynthesis; L-leucine biosynthesis; L-leucine from 3-methyl-2-oxobutanoate: step 2/4. In terms of biological role, catalyzes the isomerization between 2-isopropylmalate and 3-isopropylmalate, via the formation of 2-isopropylmaleate. The chain is 3-isopropylmalate dehydratase small subunit from Gluconacetobacter diazotrophicus (strain ATCC 49037 / DSM 5601 / CCUG 37298 / CIP 103539 / LMG 7603 / PAl5).